The chain runs to 144 residues: uncharacterized protein (144 aa).

A coiled-coil region spans residues 48 to 119; it reads ELNKLKAKAD…KETEEPKMEL (72 aa).

This is an uncharacterized protein from Archaeoglobus fulgidus (strain ATCC 49558 / DSM 4304 / JCM 9628 / NBRC 100126 / VC-16).